We begin with the raw amino-acid sequence, 552 residues long: MFS-type transporter atr4 (552 aa).

Residues 1–102 are disordered; that stretch reads MEDPKSLSAP…NIVDWDGPND (102 aa). A compositionally biased stretch (low complexity) spans 16–27; sequence ADTTTADETPAA. Composition is skewed to polar residues over residues 38-47 and 71-80; these read KAGSESSENT and LRNSSVSRSN. Residue asparagine 73 is glycosylated (N-linked (GlcNAc...) asparagine). 6 helical membrane passes run 118–138, 153–173, 182–202, 214–234, 244–264, and 272–292; these read IFLV…LATG, LGSL…LVIA, MPLY…CALG, LQGC…SDLI, GIYA…GGFL, and WLMW…FVVM. N-linked (GlcNAc...) asparagine glycosylation occurs at asparagine 314. A run of 6 helical transmembrane segments spans residues 346–366, 385–405, 425–445, 452–472, 498–518, and 521–541; these read PIIF…YLLF, GLVY…FGVF, LLPM…YGWS, WIVP…TLVC, VVGA…GIGW, and SLLA…YVYG.

It belongs to the major facilitator superfamily.

Its subcellular location is the cell membrane. In terms of biological role, MFS-type transporter; part of the gene cluster that mediates the biosynthesis of atranorin, a depside of polyketide origin that accumulates in the cortical or medullary layers of lichen thalli. This chain is MFS-type transporter atr4, found in Stereocaulon alpinum (Alpine snow lichen).